We begin with the raw amino-acid sequence, 259 residues long: Glutamate 5-kinase (259 aa).

Lys18 is a binding site for ATP. Substrate is bound by residues Ser54, Asp141, and Asn153. 173–174 (SD) provides a ligand contact to ATP.

The protein belongs to the glutamate 5-kinase family.

It is found in the cytoplasm. The catalysed reaction is L-glutamate + ATP = L-glutamyl 5-phosphate + ADP. Its pathway is amino-acid biosynthesis; L-proline biosynthesis; L-glutamate 5-semialdehyde from L-glutamate: step 1/2. Catalyzes the transfer of a phosphate group to glutamate to form L-glutamate 5-phosphate. The protein is Glutamate 5-kinase of Clavibacter sepedonicus (Clavibacter michiganensis subsp. sepedonicus).